Here is a 348-residue protein sequence, read N- to C-terminus: D-alanine--D-alanine ligase (348 aa).

Positions 132-334 (KRVLESIGIP…YPDLIEELVT (203 aa)) constitute an ATP-grasp domain. ATP is bound at residue 162 to 217 (LARLTFPIFVKPANMGSSVGISKAQTKVELRKAIQLALTYDSRVLIEQGVVAREIE). Residues Asp288, Glu301, and Asn303 each contribute to the Mg(2+) site.

The protein belongs to the D-alanine--D-alanine ligase family. It depends on Mg(2+) as a cofactor. Mn(2+) is required as a cofactor.

It localises to the cytoplasm. The enzyme catalyses 2 D-alanine + ATP = D-alanyl-D-alanine + ADP + phosphate + H(+). The protein operates within cell wall biogenesis; peptidoglycan biosynthesis. Cell wall formation. This Streptococcus pyogenes serotype M3 (strain SSI-1) protein is D-alanine--D-alanine ligase.